A 712-amino-acid chain; its full sequence is BTB/POZ domain-containing protein 18 (712 aa).

In terms of domain architecture, BTB spans 34-102 (CDVLLQAEGE…LYTSEMEVSQ (69 aa)). Disordered stretches follow at residues 157–176 (VTPSHHPHTPLPTNQTPCPL), 212–355 (RACP…EGQV), and 374–410 (ETPLKNTQDSPQIPDPGGDFQEPSGTQPFSSNEQEMS). Residues 218–228 (QEKNSSPSSHS) show a composition bias toward polar residues. A compositionally biased stretch (basic and acidic residues) spans 229–238 (QEPRENKNDT). Residues 277–288 (SKPSSILSGSSS) are compositionally biased toward low complexity. Over residues 303–313 (VNKETPEDKPK) the composition is skewed to basic and acidic residues. The span at 396–410 (PSGTQPFSSNEQEMS) shows a compositional bias: polar residues. A phosphoserine mark is found at Ser-420, Ser-671, and Ser-672. Disordered regions lie at residues 653–676 (KAGKEVSGHSELLGSLPASSEEEE) and 691–712 (TTVPSVWPDPSSESETEVDILT). Positions 702 to 712 (SESETEVDILT) are enriched in acidic residues.

It localises to the nucleus. Specifically required during spermatogenesis to promote expression of piRNA precursors. The piRNA metabolic process mediates the repression of transposable elements during meiosis by forming complexes composed of piRNAs and Piwi proteins and governs the methylation and subsequent repression of transposons, which is essential for the germline integrity. Acts by facilitating transcription elongation at piRNA loci during pachytene. This Homo sapiens (Human) protein is BTB/POZ domain-containing protein 18.